A 540-amino-acid polypeptide reads, in one-letter code: uncharacterized protein (540 aa).

2 consecutive ABC transporter domains span residues I2–Q252 and L320–L537. G34 to S41 provides a ligand contact to ATP.

This sequence belongs to the ABC transporter superfamily.

This is an uncharacterized protein from Bacillus subtilis (strain 168).